The sequence spans 1492 residues: Cystic fibrosis transmembrane conductance regulator (1492 aa).

The Cytoplasmic segment spans residues 1–78 (MQRSPIEKAN…KLVNALRRCF (78 aa)). The chain crosses the membrane as a helical span at residues 79-99 (FWRFLFYGILLYFVEFTKAVQ). The region spanning 82–366 (FLFYGILLYF…SAIQTWYDSL (285 aa)) is the ABC transmembrane type-1 1 domain. Residues 100–123 (PLCLGRIIASYNAKNTYEREIAYY) are Extracellular-facing. A helical transmembrane segment spans residues 124–147 (LALGLCLLFVVRTLFLHPAVFGLQ). Topologically, residues 148–196 (HLGMQMRIALFSLIYKKILKMSSRVLDKIDTGQLVSLLSNNLNKFDEGV) are cytoplasmic. A helical membrane pass occupies residues 197–217 (AVAHFVWIAPVQVVLLMGLIW). Residues 218-223 (NELTEF) are Extracellular-facing. A helical membrane pass occupies residues 224–244 (VFCGLGFLIMLALFQAWLGKK). Over 245-299 (MMQYRDKRAGKINERLAITSEIIDNIQSVKVYCWEDAMEKIIDDIRQVELKLTRK) the chain is Cytoplasmic. The helical transmembrane segment at 300-320 (VAYCRYFSSSAFFFSGFFVVF) threads the bilayer. The Extracellular portion of the chain corresponds to 321–340 (LSVVPYAFIHTIKLRRIFTT). The chain crosses the membrane as a helical span at residues 341–359 (ISYNIVLRMTVTRQFPSAI). Over 360 to 867 (QTWYDSLGAI…YLRYVTTNRN (508 aa)) the chain is Cytoplasmic. ATP is bound by residues tryptophan 402, serine 435, 459-466 (GSTGSGKS), and glutamine 494. In terms of domain architecture, ABC transporter 1 spans 424–647 (NGDDGLFFSN…KPDFSSQLLG (224 aa)). Residues 655–840 (SAERRNSILT…EEINEEDLKE (186 aa)) form a disordered R region region. Residues 868-888 (LVFVLILCLVIFLAEVAASLA) traverse the membrane as a helical segment. The ABC transmembrane type-1 2 domain occupies 868-1169 (LVFVLILCLV…AVNSSIDVDG (302 aa)). The Extracellular portion of the chain corresponds to 889–932 (GLWIISGLAINTGSQTNDTSTDLSHLSVFSKFITNGSHYYIFYI). N-linked (GlcNAc...) asparagine glycans are attached at residues asparagine 905 and asparagine 923. Residues 933–953 (YVGLADSFLALGVIRGLPLVH) traverse the membrane as a discontinuously helical segment. Residues 954–1004 (TLVTVSKDLHKQMLHSVLQGPMTAFNKMKAGRILNRFIKDTAIIDDMLPLT) are Cytoplasmic-facing. Residues 1005-1025 (VFDFVQLILIVVGAICVVSVL) form a helical membrane-spanning segment. Over 1026–1027 (QP) the chain is Extracellular. Residues 1028–1048 (YTLLAAIPVAVIFIMLRAYFL) traverse the membrane as a helical segment. Topologically, residues 1049-1109 (RTSQQLKQLE…TANWFLYLST (61 aa)) are cytoplasmic. A helical transmembrane segment spans residues 1110–1130 (LRWFQMRIDIVFVLFFIAVTF). At 1131–1144 (IAIATHDVGEGQVG) the chain is on the extracellular side. A helical transmembrane segment spans residues 1145 to 1165 (IILTLAMNITSTLQWAVNSSI). The Cytoplasmic portion of the chain corresponds to 1166 to 1492 (DVDGLMRSVS…AEEDLQETRL (327 aa)). The ABC transporter 2 domain occupies 1220–1453 (MMVNNLTAKY…ASLFKQVFGH (234 aa)). Residues tyrosine 1229 and 1254–1261 (GRTGAGKS) contribute to the ATP site. A compositionally biased stretch (basic residues) spans 1465 to 1474 (RNSSKRKTRP). Residues 1465-1492 (RNSSKRKTRPKISALQEEAEEDLQETRL) form a disordered region. Residues 1481-1492 (EEAEEDLQETRL) show a composition bias toward acidic residues. Residues 1483–1485 (AEE) carry the PDZ-binding motif.

It belongs to the ABC transporter superfamily. ABCC family. CFTR transporter (TC 3.A.1.202) subfamily. Monomer; does not require oligomerization for channel activity. May form oligomers in the membrane. Post-translationally, phosphorylated; cAMP treatment promotes phosphorylation and activates the channel. Dephosphorylation decreases the ATPase activity (in vitro). Phosphorylation at PKA sites activates the channel. Phosphorylation at PKC sites enhances the response to phosphorylation by PKA. In terms of tissue distribution, expressed in the rectal gland (at protein level).

Its subcellular location is the apical cell membrane. The protein resides in the early endosome membrane. The protein localises to the cell membrane. It localises to the recycling endosome membrane. It is found in the endoplasmic reticulum membrane. It catalyses the reaction ATP + H2O + closed Cl(-) channel = ADP + phosphate + open Cl(-) channel.. It carries out the reaction chloride(in) = chloride(out). The enzyme catalyses hydrogencarbonate(in) = hydrogencarbonate(out). The catalysed reaction is ATP + H2O = ADP + phosphate + H(+). Epithelial ion channel that plays an important role in the regulation of epithelial ion and water transport and fluid homeostasis. Mediates the transport of chloride ions across the cell membrane. Possesses an intrinsic ATPase activity and utilizes ATP to gate its channel; the passive flow of anions through the channel is gated by cycles of ATP binding and hydrolysis by the ATP-binding domains. The ion channel is also permeable to HCO(3)(-); selectivity depends on the extracellular chloride concentration. Exerts its function also by modulating the activity of other ion channels and transporters. Contributes to the regulation of the pH and the ion content of the epithelial fluid layer. This chain is Cystic fibrosis transmembrane conductance regulator, found in Squalus acanthias (Spiny dogfish).